A 984-amino-acid polypeptide reads, in one-letter code: Ephrin type-B receptor 1 (984 aa).

The N-terminal stretch at 1–17 (MALDCLLLFLLASAVAA) is a signal peptide. The Extracellular segment spans residues 18-540 (MEETLMDTRT…YKSELREQLP (523 aa)). The region spanning 19 to 201 (EETLMDTRTA…FFKKCPSIVQ (183 aa)) is the Eph LBD domain. Fibronectin type-III domains lie at 322–432 (VPSG…TNQA) and 433–528 (APST…TLTD). N-linked (GlcNAc...) asparagine glycans are attached at residues Asn-334, Asn-426, and Asn-480. A helical transmembrane segment spans residues 541-563 (LIAGSAAAGVVFVVSLVAISIVC). Topologically, residues 564–984 (SRKRAYSKEA…QMNQSPSVMA (421 aa)) are cytoplasmic. A Phosphotyrosine modification is found at Tyr-600. The Protein kinase domain occupies 619–882 (VKIEEVIGAG…EIVNTLDKMI (264 aa)). ATP is bound by residues 625-633 (IGAGEFGEV) and Lys-651. Asp-744 acts as the Proton acceptor in catalysis. Positions 911-975 (TAFTTVDDWL…LSSIHSMRVQ (65 aa)) constitute an SAM domain. A Phosphotyrosine; by autocatalysis modification is found at Tyr-928. The PDZ-binding signature appears at 982–984 (VMA).

Belongs to the protein kinase superfamily. Tyr protein kinase family. Ephrin receptor subfamily. Heterotetramer upon binding of the ligand. The heterotetramer is composed of an ephrin dimer and a receptor dimer. Oligomerization is probably required to induce biological responses. Interacts with EPHB6; transphosphorylates EPHB6 to form an active signaling complex. Interacts with PICK1. Interacts (through Tyr-594) with NCK1 (via SH2 domain); activates the JUN cascade to regulate cell adhesion. The ligand-activated form interacts (through Tyr-928) with GRB7 and GRB10 (via SH2 domains). The ligand-activated form interacts (residues within the catalytic domain) with GRB2 (via SH2 domain). Interacts with GRB2, SHC1 and SRC; activates the MAPK/ERK cascade to regulate cell migration. Interacts with CBL; regulates receptor degradation through ubiquitination. Interacts with ACP1. Phosphorylated. Autophosphorylation is stimulated by the ligand EFNB1. Required for interaction with SH2 domain-containing interactors, for activation of the MAPK/ERK and JUN signaling cascades and for ubiquitination by CBL. Post-translationally, ubiquitinated; (EFNB1)ligand-induced poly- and/or multi-ubiquitination by CBL is regulated by SRC and leads to lysosomal degradation. As to expression, restricted to brain and testes.

The protein localises to the cell membrane. It localises to the early endosome membrane. It is found in the cell projection. The protein resides in the dendrite. It catalyses the reaction L-tyrosyl-[protein] + ATP = O-phospho-L-tyrosyl-[protein] + ADP + H(+). Its function is as follows. Receptor tyrosine kinase which binds promiscuously transmembrane ephrin-B family ligands residing on adjacent cells, leading to contact-dependent bidirectional signaling into neighboring cells. The signaling pathway downstream of the receptor is referred to as forward signaling while the signaling pathway downstream of the ephrin ligand is referred to as reverse signaling. Cognate/functional ephrin ligands for this receptor include EFNB1, EFNB2 and EFNB3. During nervous system development, regulates retinal axon guidance redirecting ipsilaterally ventrotemporal retinal ganglion cells axons at the optic chiasm midline. This probably requires repulsive interaction with EFNB2. In the adult nervous system together with EFNB3, regulates chemotaxis, proliferation and polarity of the hippocampus neural progenitors. In addition to its role in axon guidance also plays an important redundant role with other ephrin-B receptors in development and maturation of dendritic spines and synapse formation. May also regulate angiogenesis. More generally, may play a role in targeted cell migration and adhesion. Upon activation by EFNB1 and probably other ephrin-B ligands activates the MAPK/ERK and the JNK signaling cascades to regulate cell migration and adhesion respectively. Involved in the maintenance of the pool of satellite cells (muscle stem cells) by promoting their self-renewal and reducing their activation and differentiation. The chain is Ephrin type-B receptor 1 (Ephb1) from Rattus norvegicus (Rat).